We begin with the raw amino-acid sequence, 346 residues long: Holliday junction branch migration complex subunit RuvB (346 aa).

Residues 1–182 are large ATPase domain (RuvB-L); sequence MSEPARLISP…FGIPVRLSFY (182 aa). Residues leucine 21, arginine 22, glycine 63, lysine 66, threonine 67, threonine 68, 129-131, arginine 172, tyrosine 182, and arginine 219 each bind ATP; that span reads EDF. A Mg(2+)-binding site is contributed by threonine 67. Positions 183–253 are small ATPAse domain (RuvB-S); sequence TVEELELIVR…IADEALTRLL (71 aa). The head domain (RuvB-H) stretch occupies residues 256-346; that stretch reads NVGFDQLDKR…AQFRLFQEDN (91 aa). 3 residues coordinate DNA: arginine 292, arginine 311, and arginine 316.

It belongs to the RuvB family. Homohexamer. Forms an RuvA(8)-RuvB(12)-Holliday junction (HJ) complex. HJ DNA is sandwiched between 2 RuvA tetramers; dsDNA enters through RuvA and exits via RuvB. An RuvB hexamer assembles on each DNA strand where it exits the tetramer. Each RuvB hexamer is contacted by two RuvA subunits (via domain III) on 2 adjacent RuvB subunits; this complex drives branch migration. In the full resolvosome a probable DNA-RuvA(4)-RuvB(12)-RuvC(2) complex forms which resolves the HJ.

It is found in the cytoplasm. It catalyses the reaction ATP + H2O = ADP + phosphate + H(+). In terms of biological role, the RuvA-RuvB-RuvC complex processes Holliday junction (HJ) DNA during genetic recombination and DNA repair, while the RuvA-RuvB complex plays an important role in the rescue of blocked DNA replication forks via replication fork reversal (RFR). RuvA specifically binds to HJ cruciform DNA, conferring on it an open structure. The RuvB hexamer acts as an ATP-dependent pump, pulling dsDNA into and through the RuvAB complex. RuvB forms 2 homohexamers on either side of HJ DNA bound by 1 or 2 RuvA tetramers; 4 subunits per hexamer contact DNA at a time. Coordinated motions by a converter formed by DNA-disengaged RuvB subunits stimulates ATP hydrolysis and nucleotide exchange. Immobilization of the converter enables RuvB to convert the ATP-contained energy into a lever motion, pulling 2 nucleotides of DNA out of the RuvA tetramer per ATP hydrolyzed, thus driving DNA branch migration. The RuvB motors rotate together with the DNA substrate, which together with the progressing nucleotide cycle form the mechanistic basis for DNA recombination by continuous HJ branch migration. Branch migration allows RuvC to scan DNA until it finds its consensus sequence, where it cleaves and resolves cruciform DNA. This is Holliday junction branch migration complex subunit RuvB from Rhizobium leguminosarum bv. trifolii (strain WSM2304).